The following is a 483-amino-acid chain: Altronate oxidoreductase (483 aa).

18-29 serves as a coordination point for NAD(+); it reads IIQFGEGNFLRA.

The protein belongs to the mannitol dehydrogenase family. UxaB subfamily.

The enzyme catalyses D-altronate + NAD(+) = keto-D-tagaturonate + NADH + H(+). It participates in carbohydrate metabolism; pentose and glucuronate interconversion. This Klebsiella pneumoniae (strain 342) protein is Altronate oxidoreductase.